The primary structure comprises 454 residues: Protein disulfide-isomerase TMX3 (454 aa).

A signal peptide spans 1–24 (MAAWKSWTALRLCATVVVLDMVVC). Residues 25–128 (KGFVEDLDES…KDDIIEFAHR (104 aa)) form the Thioredoxin domain. Over 25–375 (KGFVEDLDES…TIVSIFKSSP (351 aa)) the chain is Lumenal. Active-site nucleophile residues include C53 and C56. Cysteines 53 and 56 form a disulfide. N-linked (GlcNAc...) asparagine glycosylation is found at N258 and N313. The helical transmembrane segment at 376 to 396 (LMGCFLFGLPLGVISIMCYGI) threads the bilayer. Residues 397-454 (YTADTDGGYIEERYEVSKSENENQEQIEESKEQQEPSSGGSVVPTVQEPKDVLEKKKD) lie on the Cytoplasmic side of the membrane. The disordered stretch occupies residues 412–454 (VSKSENENQEQIEESKEQQEPSSGGSVVPTVQEPKDVLEKKKD). Residues 444 to 454 (EPKDVLEKKKD) are compositionally biased toward basic and acidic residues. The Di-lysine motif signature appears at 451–454 (KKKD).

The protein belongs to the protein disulfide isomerase family. In terms of processing, N-glycosylated. In terms of tissue distribution, widely expressed. Expressed in brain, testis, lung, skin, kidney, uterus, bone, stomach, liver, prostate, placenta, eye and muscle.

The protein localises to the endoplasmic reticulum membrane. It catalyses the reaction Catalyzes the rearrangement of -S-S- bonds in proteins.. Functionally, probable disulfide isomerase, which participates in the folding of proteins containing disulfide bonds. May act as a dithiol oxidase. Acts as a regulator of endoplasmic reticulum-mitochondria contact sites via its ability to regulate redox signals. The protein is Protein disulfide-isomerase TMX3 (TMX3) of Homo sapiens (Human).